Here is a 357-residue protein sequence, read N- to C-terminus: Putative F-box/kelch-repeat protein At5g38680 (357 aa).

The 48-residue stretch at 14–61 (NSNPSLPDALIISCIARVSRLYYPILSFVSKSFRSLLASPELYKERSL) folds into the F-box domain. Kelch repeat units follow at residues 131-175 (NIYN…VLDG), 177-224 (IYVA…SKSL), 226-267 (IDEK…YCEI), and 268-313 (ENVL…GGKK).

In Arabidopsis thaliana (Mouse-ear cress), this protein is Putative F-box/kelch-repeat protein At5g38680.